The following is a 360-amino-acid chain: Popeye domain-containing protein 1 (360 aa).

The Extracellular portion of the chain corresponds to 1 to 48 (MNYTESSPLRESTAIGFTPELESIIPVPSNKTTCENWREIHHLVFHVA). Residues N2 and N30 are each glycosylated (N-linked (GlcNAc...) asparagine). A helical membrane pass occupies residues 49 to 69 (NICFAVGLVIPTTLHLHMIFL). R70 is a topological domain (cytoplasmic). A helical transmembrane segment spans residues 71–91 (GMLTLGCTLYIVWATLYRCAL). Residue D92 is a topological domain, extracellular. Residues 93–113 (IMIWNSVFLGVNILHLSYLLY) form a helical membrane-spanning segment. Residues 93 to 115 (IMIWNSVFLGVNILHLSYLLYKK) are required for interaction with CAV3. Topologically, residues 114 to 360 (KKRPVKIEKE…PNTLKVHQLP (247 aa)) are cytoplasmic. The tract at residues 136-186 (RVPPDLFRRLTGQFCMIQTLKKGQTYAAEDKTSVDDRLSILLKGKMKVSYR) is required for interaction with KCNK2. Phosphoserine is present on residues S295 and S318. Residues 317-360 (SSLHVSSPHQRASAKMKPIEEGAEDDDDVFEPASPNTLKVHQLP) form a disordered region. Positions 337 to 346 (EGAEDDDDVF) are enriched in acidic residues. Over residues 350–360 (SPNTLKVHQLP) the composition is skewed to polar residues.

This sequence belongs to the popeye family. In terms of assembly, homodimer. Homodimerization requires the C-terminus cytoplasmic region. Interacts (via the C-terminus cytoplasmic tail) with TJP1. Interacts (via the C-terminus cytoplasmic tail) with ARHGEF25/GEFT (via the DH domain). Interacts (via the C-terminus cytoplasmic tail) with VAMP3. Interacts with KCNK2; the interaction enhances KCNK2 surface expression and is inhibited by cAMP. Interacts with CAV3. As to expression, expressed in epithelial cells (at protein level). Expressed in fetal and adult heart and skeletal muscle.

The protein resides in the lateral cell membrane. The protein localises to the cell junction. It localises to the tight junction. Its subcellular location is the membrane. It is found in the cell membrane. The protein resides in the sarcolemma. The protein localises to the caveola. In terms of biological role, cell adhesion molecule involved in the establishment and/or maintenance of cell integrity. Involved in the formation and regulation of the tight junction (TJ) paracellular permeability barrier in epithelial cells. Plays a role in VAMP3-mediated vesicular transport and recycling of different receptor molecules through its interaction with VAMP3. Plays a role in the regulation of cell shape and movement by modulating the Rho-family GTPase activity through its interaction with ARHGEF25/GEFT. Induces primordial adhesive contact and aggregation of epithelial cells in a Ca(2+)-independent manner. Also involved in striated muscle regeneration and repair and in the regulation of cell spreading. Important for the maintenance of cardiac function. Plays a regulatory function in heart rate dynamics mediated, at least in part, through cAMP-binding and, probably, by increasing cell surface expression of the potassium channel KCNK2 and enhancing current density. Is also a caveolae-associated protein important for the preservation of caveolae structural and functional integrity as well as for heart protection against ischemia injury. In Homo sapiens (Human), this protein is Popeye domain-containing protein 1.